Reading from the N-terminus, the 373-residue chain is S-adenosylmethionine:tRNA ribosyltransferase-isomerase (373 aa).

Belongs to the QueA family. In terms of assembly, monomer.

Its subcellular location is the cytoplasm. The enzyme catalyses 7-aminomethyl-7-carbaguanosine(34) in tRNA + S-adenosyl-L-methionine = epoxyqueuosine(34) in tRNA + adenine + L-methionine + 2 H(+). It participates in tRNA modification; tRNA-queuosine biosynthesis. In terms of biological role, transfers and isomerizes the ribose moiety from AdoMet to the 7-aminomethyl group of 7-deazaguanine (preQ1-tRNA) to give epoxyqueuosine (oQ-tRNA). The polypeptide is S-adenosylmethionine:tRNA ribosyltransferase-isomerase (Caulobacter sp. (strain K31)).